The primary structure comprises 400 residues: CCA-adding enzyme (400 aa).

ATP contacts are provided by glycine 28 and arginine 31. The CTP site is built by glycine 28 and arginine 31. Mg(2+) is bound by residues aspartate 41 and aspartate 43. ATP is bound by residues arginine 112, aspartate 155, arginine 158, arginine 161, and arginine 164. CTP contacts are provided by arginine 112, aspartate 155, arginine 158, arginine 161, and arginine 164.

It belongs to the tRNA nucleotidyltransferase/poly(A) polymerase family. Bacterial CCA-adding enzyme type 3 subfamily. As to quaternary structure, homodimer. Requires Mg(2+) as cofactor.

The enzyme catalyses a tRNA precursor + 2 CTP + ATP = a tRNA with a 3' CCA end + 3 diphosphate. It catalyses the reaction a tRNA with a 3' CCA end + 2 CTP + ATP = a tRNA with a 3' CCACCA end + 3 diphosphate. Catalyzes the addition and repair of the essential 3'-terminal CCA sequence in tRNAs without using a nucleic acid template. Adds these three nucleotides in the order of C, C, and A to the tRNA nucleotide-73, using CTP and ATP as substrates and producing inorganic pyrophosphate. tRNA 3'-terminal CCA addition is required both for tRNA processing and repair. Also involved in tRNA surveillance by mediating tandem CCA addition to generate a CCACCA at the 3' terminus of unstable tRNAs. While stable tRNAs receive only 3'-terminal CCA, unstable tRNAs are marked with CCACCA and rapidly degraded. This Staphylococcus epidermidis (strain ATCC 12228 / FDA PCI 1200) protein is CCA-adding enzyme.